Here is a 538-residue protein sequence, read N- to C-terminus: Telomerase Cajal body protein 1 (538 aa).

The segment at 1-53 (MKTSEERLVVPDSLSSDQAPAPVPQGSPVDENTDSEPVPQPCGGDDRSQVAAD) is disordered. Residues S27 and S87 each carry the phosphoserine modification. A disordered region spans residues 92-128 (EQELSENVSLPVEDTNQPELASGEDVEGVSEEPGPVD). Over residues 113–128 (SGEDVEGVSEEPGPVD) the composition is skewed to acidic residues. 6 WD repeats span residues 154 to 194 (AHSE…YSAT), 210 to 255 (EGDT…LRAS), 260 to 301 (NHLD…RDCE), 311 to 352 (GQSG…ALLG), 353 to 393 (GHQG…HLLW), and 399 to 438 (VTTN…GDSS). 2 disordered regions span residues 471–491 (QRMF…GDLP) and 509–538 (CGGG…DGLI). T478 is subject to Phosphothreonine. S480 bears the Phosphoserine mark. Positions 529–538 (RAEGCGDGLI) are enriched in gly residues.

This sequence belongs to the TCAB1 family. Component of the telomerase holoenzyme complex composed of one molecule of TERT, one molecule of WRAP53/TCAB1, two molecules of H/ACA ribonucleoprotein complex subunits DKC1, NOP10, NHP2 and GAR1, and a telomerase RNA template component (TERC). The telomerase holoenzyme complex is associated with TEP1, SMG6/EST1A and POT1. Interacts with the chaperonin-containing T-complex (TRiC) complex; which mediates the folding of WRAP53/TCAB1. Interacts with COIL. Interacts with SMN1. Interacts with RNF8. Interacts with histone H2AX. As to expression, preferentially expressed in testis.

The protein resides in the nucleus. It is found in the cajal body. Its subcellular location is the chromosome. The protein localises to the telomere. In terms of biological role, RNA chaperone that plays a key role in telomere maintenance and RNA localization to Cajal bodies. Specifically recognizes and binds the Cajal body box (CAB box) present in both small Cajal body RNAs (scaRNAs) and telomerase RNA template component (TERC). Essential component of the telomerase holoenzyme complex, a ribonucleoprotein complex essential for the replication of chromosome termini that elongates telomeres in most eukaryotes. In the telomerase holoenzyme complex, required to stimulate the catalytic activity of the complex. Acts by specifically binding the CAB box of the TERC RNA and controlling the folding of the CR4/CR5 region of the TERC RNA, a critical step for telomerase activity. In addition, also controls telomerase holoenzyme complex localization to Cajal body. During S phase, required for delivery of TERC to telomeres during S phase and for telomerase activity. In addition to its role in telomere maintenance, also required for Cajal body formation, probably by mediating localization of scaRNAs to Cajal bodies. Also plays a role in DNA repair: relocalizes to sites of DNA double-strand breaks in response to DNA damage and promotes the repair of DNA double-strand breaks. Acts by recruiting the ubiquitin ligase RNF8 to DNA breaks and promote both homologous recombination (HR) and non-homologous end joining (NHEJ). This Mesocricetus auratus (Golden hamster) protein is Telomerase Cajal body protein 1.